The sequence spans 407 residues: Acetate kinase (407 aa).

Residue Asn10 coordinates Mg(2+). ATP is bound at residue Lys17. Arg93 is a binding site for substrate. Asp150 acts as the Proton donor/acceptor in catalysis. Residues 210 to 214 (HLGNG), 284 to 286 (DMR), and 332 to 336 (GVGEN) each bind ATP. Glu386 is a binding site for Mg(2+).

This sequence belongs to the acetokinase family. In terms of assembly, homodimer. The cofactor is Mg(2+). Mn(2+) is required as a cofactor.

Its subcellular location is the cytoplasm. The enzyme catalyses acetate + ATP = acetyl phosphate + ADP. Its pathway is metabolic intermediate biosynthesis; acetyl-CoA biosynthesis; acetyl-CoA from acetate: step 1/2. Functionally, catalyzes the formation of acetyl phosphate from acetate and ATP. Can also catalyze the reverse reaction. This is Acetate kinase from Streptomyces coelicolor (strain ATCC BAA-471 / A3(2) / M145).